Reading from the N-terminus, the 229-residue chain is Potassium/proton antiporter CemA (229 aa).

Transmembrane regions (helical) follow at residues 7-27 (LTPF…SLSF), 106-126 (IVLH…YYFL), and 189-209 (IISG…KYWI).

Belongs to the CemA family.

It localises to the plastid. The protein localises to the chloroplast inner membrane. It catalyses the reaction K(+)(in) + H(+)(out) = K(+)(out) + H(+)(in). Functionally, contributes to K(+)/H(+) antiport activity by supporting proton efflux to control proton extrusion and homeostasis in chloroplasts in a light-dependent manner to modulate photosynthesis. Prevents excessive induction of non-photochemical quenching (NPQ) under continuous-light conditions. Indirectly promotes efficient inorganic carbon uptake into chloroplasts. This chain is Potassium/proton antiporter CemA, found in Calycanthus floridus var. glaucus (Eastern sweetshrub).